Here is a 326-residue protein sequence, read N- to C-terminus: Eukaryotic translation initiation factor 3 subunit I (326 aa).

WD repeat units lie at residues 8–47 (GHERSITQIKYNREGDLLFSSSKDQKPNVWYSLNGERLGT), 50–89 (GHQGAVWCLDVDWESRKLITGAGDMTTKLWDVEYGTVIAS), 145–184 (MVESKITSMQWGPLDETIITGHDNGNIAIWDVRKGQKVVD), 188–227 (DHAAGINDMQLSKDGTMFVTASKDNTAKLFDAESLMCLKT), and 285–326 (GHFG…NIFE).

Belongs to the eIF-3 subunit I family. Component of the eukaryotic translation initiation factor 3 (eIF-3) complex. The eIF-3 complex interacts with pix.

It is found in the cytoplasm. Component of the eukaryotic translation initiation factor 3 (eIF-3) complex, which is involved in protein synthesis of a specialized repertoire of mRNAs and, together with other initiation factors, stimulates binding of mRNA and methionyl-tRNAi to the 40S ribosome. The eIF-3 complex specifically targets and initiates translation of a subset of mRNAs involved in cell proliferation. The sequence is that of Eukaryotic translation initiation factor 3 subunit I from Drosophila grimshawi (Hawaiian fruit fly).